A 416-amino-acid polypeptide reads, in one-letter code: Nuclear hormone receptor family member nhr-67 (416 aa).

The segment at residues 18 to 98 (DVDCRVCEDH…IGMNKDAVQH (81 aa)) is a DNA-binding region (nuclear receptor). NR C4-type zinc fingers lie at residues 21–41 (CRVC…CDGC) and 57–86 (CKNK…LRKC). The interval 331–398 (KTETEEGEDI…SSRPRHSIRS (68 aa)) is disordered. Over residues 335–346 (EEGEDIEEEDDA) the composition is skewed to acidic residues. Residues 377–390 (SSTQPSSASSPSSS) show a composition bias toward low complexity.

Belongs to the nuclear hormone receptor family. Expressed in linker cell.

It localises to the nucleus. In terms of biological role, orphan nuclear receptor that binds DNA containing an extended core motif half-site sequence 5'-AAGTCA-3'. In males, plays an essential role in the migration of the linker cell which guides gonad elongation during the L3 and L4 stages of larval development by negatively regulating the expression of netrin receptor unc-5 at the mid-L3 stage. Involved in the regulation of non-apoptotic cell death in the linker cell, acting upstream of or in parallel to transcription factor hsf-1. Represses hypoxia response genes, fmo-2 and acs-2, in both normoxic and hypoxic conditions, probably acting via repression of nuclear receptor nhr-49. The sequence is that of Nuclear hormone receptor family member nhr-67 (nhr-67) from Caenorhabditis elegans.